A 479-amino-acid chain; its full sequence is Phosphatidylinositol 4-kinase type 2-alpha (479 aa).

Residue methionine 1 is modified to N-acetylmethionine. Residues 1–74 (MDETSPLVSP…ARGAAAQGQT (74 aa)) are disordered. Residues serine 5, serine 9, serine 44, serine 47, and serine 51 each carry the phosphoserine modification. Positions 31–45 (VPGGAVRVAAAAGSG) are enriched in low complexity. Positions 53–66 (GHDRERQPLLDRAR) are enriched in basic and acidic residues. Positions 124–453 (CIFPERIYQG…VQMPPVIVET (330 aa)) constitute a PI3K/PI4K catalytic domain. Residues 130–136 (IYQGSSG) are G-loop. Residues 131-137 (YQGSSGS) and lysine 152 each bind ATP. The important for substrate binding stretch occupies residues 157–159 (EPY). Residues 165–178 (KWTKWLQKLCCPCC) are important for interaction with membranes. S-palmitoyl cysteine attachment occurs at residues cysteine 174, cysteine 175, cysteine 177, and cysteine 178. 261–264 (QLFV) contributes to the ATP binding site. Positions 268–276 (KDADYWLRR) are important for interaction with membranes. The catalytic loop stretch occupies residues 305-313 (RNTDRGNDN). An activation loop region spans residues 344–364 (AIDNGLAFPLKHPDSWRAYPF). Aspartate 346 serves as a coordination point for ATP. The important for interaction with membranes stretch occupies residues 359 to 368 (WRAYPFYWAW). Serine 462 is subject to Phosphoserine.

It belongs to the PI3/PI4-kinase family. Type II PI4K subfamily. As to quaternary structure, associates with the BLOC-1 and the AP-3 complexes; the BLOC-1 complex is required for optimal binding of PI4K2A to the AP-3 complex. Interacts with BLOC1S5 and DTNBP1. Interacts with FOS; this interaction may enhance phosphatidylinositol phosphorylation activity. Interacts with ITCH. Interacts with ATG9A. Post-translationally, palmitoylated by ZDHHC3 and ZDHHC7 in the CCPCC motif. Palmitoylation is cholesterol-dependent, and required for TGN localization. Ubiquitinated by ITCH; this does not lead to proteasomal degradation. Widely expressed. Highest expression is observed in kidney, brain, heart, skeletal muscle, and placenta and lowest expression is observed in colon, thymus, and small intestine.

Its subcellular location is the golgi apparatus. It localises to the trans-Golgi network membrane. It is found in the membrane raft. The protein resides in the cell projection. The protein localises to the dendrite. Its subcellular location is the presynaptic cell membrane. It localises to the synapse. It is found in the synaptosome. The protein resides in the mitochondrion. The protein localises to the endosome. Its subcellular location is the endosome membrane. It localises to the cytoplasmic vesicle. It is found in the membrane. The protein resides in the cell membrane. The protein localises to the perikaryon. Its subcellular location is the neuron projection. The enzyme catalyses a 1,2-diacyl-sn-glycero-3-phospho-(1D-myo-inositol) + ATP = a 1,2-diacyl-sn-glycero-3-phospho-(1D-myo-inositol 4-phosphate) + ADP + H(+). Functionally, membrane-bound phosphatidylinositol-4 kinase (PI4-kinase) that catalyzes the phosphorylation of phosphatidylinositol (PI) to phosphatidylinositol 4-phosphate (PI4P), a lipid that plays important roles in endocytosis, Golgi function, protein sorting and membrane trafficking and is required for prolonged survival of neurons. Besides, phosphorylation of phosphatidylinositol (PI) to phosphatidylinositol 4-phosphate (PI4P) is the first committed step in the generation of phosphatidylinositol 4,5-bisphosphate (PIP2), a precursor of the second messenger inositol 1,4,5-trisphosphate (InsP3). This Homo sapiens (Human) protein is Phosphatidylinositol 4-kinase type 2-alpha (PI4K2A).